The sequence spans 284 residues: ATP synthase gamma chain (284 aa).

It belongs to the ATPase gamma chain family. As to quaternary structure, F-type ATPases have 2 components, CF(1) - the catalytic core - and CF(0) - the membrane proton channel. CF(1) has five subunits: alpha(3), beta(3), gamma(1), delta(1), epsilon(1). CF(0) has three main subunits: a, b and c.

It localises to the cell membrane. Its function is as follows. Produces ATP from ADP in the presence of a proton gradient across the membrane. The gamma chain is believed to be important in regulating ATPase activity and the flow of protons through the CF(0) complex. This is ATP synthase gamma chain from Bacillus licheniformis (strain ATCC 14580 / DSM 13 / JCM 2505 / CCUG 7422 / NBRC 12200 / NCIMB 9375 / NCTC 10341 / NRRL NRS-1264 / Gibson 46).